Reading from the N-terminus, the 379-residue chain is Anomalous homeobox protein (379 aa).

The homeobox DNA-binding region spans 135 to 196 (PEGLKSRNFP…NYRRRQRALP (62 aa)). The segment at 195–283 (LPQHMKPAQQ…SKPLDVSGHP (89 aa)) is disordered. Residues 237 to 246 (QWSEEREEKG) show a composition bias toward basic and acidic residues.

The protein localises to the nucleus. This is Anomalous homeobox protein (ANHX) from Homo sapiens (Human).